A 1372-amino-acid polypeptide reads, in one-letter code: uncharacterized protein (1372 aa).

A disordered region spans residues M1–Q67. Polar residues predominate over residues M17 to G28. A coiled-coil region spans residues N75–K143. Disordered regions lie at residues N178–D199, H238–S287, E380–R414, Q427–P447, and E486–I531. Composition is skewed to low complexity over residues G184–G198 and H238–G251. Composition is skewed to polar residues over residues T257–S287 and T399–P408. A coiled-coil region spans residues K409–S438. The span at E486–S499 shows a compositional bias: basic and acidic residues. Residues A514–A523 show a composition bias toward low complexity. A coiled-coil region spans residues L539–H580. The segment covering V652–N673 has biased composition (low complexity). Disordered stretches follow at residues V652–K679, S799–H820, S860–V897, S1151–K1181, and S1231–K1250. Composition is skewed to polar residues over residues S860–I871 and S1151–P1160.

This is an uncharacterized protein from Drosophila melanogaster (Fruit fly).